The primary structure comprises 180 residues: Cell wall / vacuolar inhibitor of fructosidase 2 (180 aa).

Residues 1–23 (MASSLIFLLLVTLTFSASTLISA) form the signal peptide. Asn-26 is a glycosylation site (N-linked (GlcNAc...) asparagine). A disulfide bridge links Cys-35 with Cys-44. 2 N-linked (GlcNAc...) asparagine glycosylation sites follow: Asn-73 and Asn-84. A disulfide bridge connects residues Cys-101 and Cys-141.

The protein belongs to the PMEI family. Mostly expressed at low levels in seedlings, stems, leaves and flowers (in all organs), and, to a lower extent, in roots and siliques.

It localises to the vacuole. In terms of biological role, inhibits fructosidases from both cell wall (cell wall invertase CWI) and vacuoles (vacuolar invertase VI). The polypeptide is Cell wall / vacuolar inhibitor of fructosidase 2 (C/VIF2) (Arabidopsis thaliana (Mouse-ear cress)).